The sequence spans 145 residues: Protein H2A.5 (145 aa).

The interval 118–145 (SPAAAEKEAKSQKAAAKSPKKKTAATKE) is disordered. Positions 135–138 (SPKK) match the SPKK motif motif. A compositionally biased stretch (basic residues) spans 135–145 (SPKKKTAATKE).

This sequence belongs to the histone H2A family. As to quaternary structure, the nucleosome is a histone octamer containing two molecules each of H2A, H2B, H3 and H4 assembled in one H3-H4 heterotetramer and two H2A-H2B heterodimers. The octamer wraps approximately 147 bp of DNA. In terms of tissue distribution, abundant in meristematic tissues.

The protein resides in the nucleus. It localises to the chromosome. In terms of biological role, core component of nucleosome. Nucleosomes wrap and compact DNA into chromatin, limiting DNA accessibility to the cellular machineries which require DNA as a template. Histones thereby play a central role in transcription regulation, DNA repair, DNA replication and chromosomal stability. DNA accessibility is regulated via a complex set of post-translational modifications of histones, also called histone code, and nucleosome remodeling. This chain is Protein H2A.5 (H2A-2), found in Triticum aestivum (Wheat).